The following is a 927-amino-acid chain: Sodium/calcium exchanger 3 (927 aa).

The N-terminal stretch at 1–30 is a signal peptide; that stretch reads MAWLRLQPLTSAFLHFGLVTFVLFLNGLRA. Residues 31–73 lie on the Extracellular side of the membrane; that stretch reads EAGGSGDVPSTGQNNESCSGSSDCKEGVILPIWYPENPSLGDK. A glycan (N-linked (GlcNAc...) asparagine) is linked at asparagine 45. Residues 74–94 form a helical membrane-spanning segment; it reads IARVIVYFVALIYMFLGVSII. The Cytoplasmic portion of the chain corresponds to 95–147; that stretch reads ADRFMASIEVITSQEREVTIKKPNGETSTTTIRVWNETVSNLTLMALGSSAPE. The Alpha-1 repeat unit spans residues 140 to 180; sequence ALGSSAPEILLSLIEVCGHGFIAGDLGPSTIVGSAAFNMFI. A helical transmembrane segment spans residues 148–168; that stretch reads ILLSLIEVCGHGFIAGDLGPS. A topological domain (extracellular) is located at residue threonine 169. The chain crosses the membrane as a helical span at residues 170-190; sequence IVGSAAFNMFIIIGICVYVIP. The Cytoplasmic portion of the chain corresponds to 191–202; that stretch reads DGETRKIKHLRV. A helical transmembrane segment spans residues 203 to 223; the sequence is FFITAAWSIFAYIWLYMILAV. At 224 to 230 the chain is on the extracellular side; sequence FSPGVVQ. Residues 231–251 form a helical membrane-spanning segment; sequence VWEGLLTLFFFPVCVLLAWVA. Topologically, residues 252 to 726 are cytoplasmic; sequence DKRLLFYKYM…DESGEERLPS (475 aa). The tract at residues 253–272 is putative calmodulin-binding region; the sequence is KRLLFYKYMHKKYRTDKHRG. 2 consecutive Calx-beta domains span residues 386-485 and 519-619; these read VHTD…VRLS and ATVT…IALG. Residues glutamate 409, aspartate 445, aspartate 470, aspartate 471, isoleucine 473, glutamate 475, glutamate 478, aspartate 525, aspartate 526, aspartate 527, glutamate 543, aspartate 579, glutamate 606, glutamate 607, and glutamate 672 each contribute to the Ca(2+) site. Residues 727–747 traverse the membrane as a helical segment; sequence CFDYVMHFLTVFWKVLFACVP. Topologically, residues 748–754 are extracellular; it reads PTEYCHG. Residues 755–775 traverse the membrane as a helical segment; the sequence is WACFAVSILIIGMLTAIIGDL. Residues 776-778 are Cytoplasmic-facing; that stretch reads ASH. Residues 779 to 799 form a helical membrane-spanning segment; it reads FGCTIGLKDSVTAVVFVAFGT. The stretch at 796–832 is one Alpha-2 repeat; the sequence is AFGTSVPDTFASKAAALQDVYADASIGNVTGSNAVNV. At 800–828 the chain is on the extracellular side; the sequence is SVPDTFASKAAALQDVYADASIGNVTGSN. An N-linked (GlcNAc...) asparagine glycan is attached at asparagine 823. Residues 829–849 traverse the membrane as a helical segment; sequence AVNVFLGIGLAWSVAAIYWAL. Over 850 to 860 the chain is Cytoplasmic; the sequence is QGQEFHVSAGT. Residues 861–881 form a helical membrane-spanning segment; sequence LAFSVTLFTIFAFVCISVLLY. The Extracellular segment spans residues 882–903; the sequence is RRRPHLGGELGGPRGCKLATTW. The chain crosses the membrane as a helical span at residues 904 to 924; sequence LFVSLWLLYILFATLEAYCYI. Residues 925–927 lie on the Cytoplasmic side of the membrane; the sequence is KGF.

Belongs to the Ca(2+):cation antiporter (CaCA) (TC 2.A.19) family. SLC8 subfamily. Interacts with AKAP1. As to expression, isoform 2 is expressed in brain and skeletal muscle. Isoform 3 is expressed in excitable cells of brain, retina and skeletal muscle. Isoform 4 is expressed in skeletal muscle.

It localises to the cell membrane. The protein localises to the perikaryon. The protein resides in the cell projection. It is found in the dendrite. Its subcellular location is the dendritic spine. It localises to the sarcolemma. The protein localises to the cytoplasm. The protein resides in the sarcoplasm. It is found in the cell junction. Its subcellular location is the mitochondrion outer membrane. It localises to the perinuclear region. The protein localises to the endoplasmic reticulum membrane. It carries out the reaction Ca(2+)(in) + 3 Na(+)(out) = Ca(2+)(out) + 3 Na(+)(in). Its activity is regulated as follows. Calcium transport is down-regulated by Na(+) and stimulated by Ca(2+). Functionally, mediates the electrogenic exchange of Ca(2+) against Na(+) ions across the cell membrane, and thereby contributes to the regulation of cytoplasmic Ca(2+) levels and Ca(2+)-dependent cellular processes. Contributes to cellular Ca(2+) homeostasis in excitable cells, both in muscle and in brain. In a first phase, voltage-gated channels mediate the rapid increase of cytoplasmic Ca(2+) levels due to release of Ca(2+) stores from the endoplasmic reticulum. SLC8A3 mediates the export of Ca(2+) from the cell during the next phase, so that cytoplasmic Ca(2+) levels rapidly return to baseline. Contributes to Ca(2+) transport during excitation-contraction coupling in muscle. In neurons, contributes to the rapid decrease of cytoplasmic Ca(2+) levels back to baseline after neuronal activation, and thereby contributes to modulate synaptic plasticity, learning and memory. Required for normal oligodendrocyte differentiation and for normal myelination. Mediates Ca(2+) efflux from mitochondria and contributes to mitochondrial Ca(2+) ion homeostasis. This is Sodium/calcium exchanger 3 (SLC8A3) from Homo sapiens (Human).